A 380-amino-acid polypeptide reads, in one-letter code: 1-deoxy-D-xylulose 5-phosphate reductoisomerase (380 aa).

Residues T10, G11, S12, I13, G36, R37, N38, and N120 each contribute to the NADPH site. Position 121 (K121) interacts with 1-deoxy-D-xylulose 5-phosphate. E122 contacts NADPH. Position 146 (D146) interacts with Mn(2+). Residues S147, E148, S172, and H195 each coordinate 1-deoxy-D-xylulose 5-phosphate. Residue E148 coordinates Mn(2+). G201 contacts NADPH. 1-deoxy-D-xylulose 5-phosphate-binding residues include S208, N213, K214, and E217. Position 217 (E217) interacts with Mn(2+).

Belongs to the DXR family. Mg(2+) is required as a cofactor. It depends on Mn(2+) as a cofactor.

The catalysed reaction is 2-C-methyl-D-erythritol 4-phosphate + NADP(+) = 1-deoxy-D-xylulose 5-phosphate + NADPH + H(+). The protein operates within isoprenoid biosynthesis; isopentenyl diphosphate biosynthesis via DXP pathway; isopentenyl diphosphate from 1-deoxy-D-xylulose 5-phosphate: step 1/6. In terms of biological role, catalyzes the NADPH-dependent rearrangement and reduction of 1-deoxy-D-xylulose-5-phosphate (DXP) to 2-C-methyl-D-erythritol 4-phosphate (MEP). In Listeria monocytogenes serotype 4a (strain HCC23), this protein is 1-deoxy-D-xylulose 5-phosphate reductoisomerase.